The chain runs to 2426 residues: Protein SON (2426 aa).

An N-acetylalanine modification is found at Ala2. Lys16 carries the N6-acetyllysine modification. A compositionally biased stretch (polar residues) spans 24–42; sequence LSSGRNEGQLNGETNTPIE. Positions 24-56 are disordered; sequence LSSGRNEGQLNGETNTPIEGNQAGDAAASARSL. Lys64 participates in a covalent cross-link: Glycyl lysine isopeptide (Lys-Gly) (interchain with G-Cter in SUMO2). Basic and acidic residues predominate over residues 77-88; that stretch reads LRYKPDLKEGSR. A disordered region spans residues 77–155; it reads LRYKPDLKEG…GNIDLESDSF (79 aa). A Phosphoserine modification is found at Ser94. Basic residues predominate over residues 106–130; sequence KKSKKHKKHKNKKKKKKKEKEKKYK. Residues 131-146 are compositionally biased toward basic and acidic residues; that stretch reads RQPEESESKTKSHDDG. A phosphoserine mark is found at Ser142, Ser152, Ser154, Ser160, and Ser283. An N6-acetyllysine modification is found at Lys288. Residues 305–328 form a disordered region; sequence TLVVSSETPTEVYPEPSTSTTMDF. The residue at position 400 (Thr400) is a Phosphothreonine. The tract at residues 406–442 is disordered; it reads PGPSATPVPELPGPLSTPVPELPGPPATAVPELPGPS. Positions 409–442 are enriched in pro residues; the sequence is SATPVPELPGPLSTPVPELPGPPATAVPELPGPS. The tract at residues 726-895 is 17 X 10 AA tandem repeats of L-A-[ST]-[NSG]-[TS]-MDSQM; the sequence is LASNTMDSQM…LASGTMDAQM (170 aa). The interval 912–988 is 11 X 7 AA tandem repeats of [DR]-P-Y-R-[LI][AG][QHP]; sequence DPYRLAQDPY…IAPRPYRLAP (77 aa). Position 950 is an omega-N-methylarginine (Arg950). A Phosphothreonine modification is found at Thr959. Position 998 is a phosphoserine (Ser998). 14 repeat units span residues 1006 to 1011, 1014 to 1019, 1021 to 1026, 1030 to 1035, 1038 to 1043, 1046 to 1051, 1055 to 1060, 1063 to 1068, 1071 to 1076, 1080 to 1085, 1089 to 1094, 1100 to 1105, 1111 to 1116, and 1121 to 1126. Residues 1006–1126 form a 14 X 6 AA repeats of [ED]-R-S-M-M-S region; it reads ERSMMSSYER…SYTADRSMMS (121 aa). Arg1007 is modified (asymmetric dimethylarginine). At Arg1022 the chain carries Asymmetric dimethylarginine. A phosphoserine mark is found at Ser1035 and Ser1043. Ser1060 and Ser1068 each carry phosphoserine. The residue at position 1082 (Ser1082) is a Phosphoserine. Positions 1144–1236 are disordered; the sequence is YMVPPLPPEE…PTDYSVSASD (93 aa). The 3 X 11 AA tandem repats of P-P-L-P-P-E-E-P-P-[TME]-[MTG] stretch occupies residues 1147 to 1179; the sequence is PPLPPEEPPTMPPLPPEEPPMTPPLPPEEPPEG. The span at 1147 to 1180 shows a compositional bias: pro residues; the sequence is PPLPPEEPPTMPPLPPEEPPMTPPLPPEEPPEGP. Polar residues predominate over residues 1186 to 1196; the sequence is QSALTAENTWP. Residues 1198 to 1224 show a composition bias toward low complexity; the sequence is EVPSSPSEESVSQPEPPVSQSEISEPS. Residues 1359 to 1390 are 4 X 8 AA tandem repeats of V-L-E-SS-[AVT]-VT; the sequence is VLESSAVTVLESSTVTVLESSTVTVLEPSVVT. Phosphoserine occurs at positions 1556 and 1651. The tract at residues 1645 to 1722 is disordered; sequence TSPSGGSEAD…KETLPDSGFS (78 aa). Residues 1677-1689 are compositionally biased toward basic and acidic residues; sequence KDTEEPLPVKESD. Ser1697, Ser1701, Ser1747, Ser1759, Ser1766, Ser1769, Ser1782, and Ser1783 each carry phosphoserine. A disordered region spans residues 1754-2054; it reads GPLLASDVGR…RSPKRLTDLD (301 aa). 3 stretches are compositionally biased toward basic and acidic residues: residues 1790–1801, 1809–1822, and 1830–1845; these read YEIFVKVKDTHE, RDKG…DSSL, and KSSE…ESRS. Composition is skewed to basic residues over residues 1846–1909 and 1917–1948; these read RARK…RKRS and TVRA…RRRS. Tandem repeats lie at residues 1925 to 1931, 1934 to 1952, 1953 to 1959, 1960 to 1966, 1967 to 1973, 1974 to 1980, 1981 to 1987, 1988 to 1994, and 1995 to 2013. Residues 1925–1994 form a 7 X 7 AA repeats of P-S-R-R-S-R-[TS] region; that stretch reads PSRRSRSHTP…SRTPSRRSRT (70 aa). Residues 1934-2013 are 2 X 19 AA repeats of P-S-R-R-R-R-S-R-S-V-V-R-R-R-S-F-S-I-S; that stretch reads PSRRRRSRSV…VVRRRSFSIS (80 aa). 3 positions are modified to phosphoserine: Ser1948, Ser1950, and Ser1952. Basic residues predominate over residues 1955–2009; it reads RRSRTPSRRSRTPSRRSRTPSRRSRTPSRRSRTPSRRSRTPSRRRRSRSVVRRRS. Ser2009, Ser2011, Ser2013, Ser2029, and Ser2031 each carry phosphoserine. The 3 X tandem repeats of [ST]-P-[VLI]-R-[RL]-[RK]-[RF]-S-R stretch occupies residues 2013 to 2039; it reads SPVRLRRSRTPLRRRFSRSPIRRKRSR. Positions 2016–2038 are enriched in basic residues; the sequence is RLRRSRTPLRRRFSRSPIRRKRS. The segment covering 2039–2054 has biased composition (basic and acidic residues); sequence RSSERGRSPKRLTDLD. At Lys2055 the chain carries N6-acetyllysine; alternate. A Glycyl lysine isopeptide (Lys-Gly) (interchain with G-Cter in SUMO2); alternate cross-link involves residue Lys2055. Lys2092 is covalently cross-linked (Glycyl lysine isopeptide (Lys-Gly) (interchain with G-Cter in SUMO2)). Ser2129 bears the Phosphoserine mark. Lys2149 participates in a covalent cross-link: Glycyl lysine isopeptide (Lys-Gly) (interchain with G-Cter in SUMO2). Phosphothreonine is present on Thr2163. A disordered region spans residues 2200-2220; sequence KNGEENKDDDNVFSSNLPSEP. Ser2238 is modified (phosphoserine). The region spanning 2305-2351 is the G-patch domain; the sequence is TGGMGAVLMRKMGWREGEGLGKNKEGNKEPILVDFKTDRKGLVAVGE. The 56-residue stretch at 2371–2426 folds into the DRBM domain; the sequence is HPVSALMEICNKRRWQPPEFLLVHDSGPDHRKHFLFRVLRNGALTRPNCMFFLNRY.

In terms of assembly, interacts with SRSF2. Associates with the spliceosome. Interacts with the AML1-MTG8 (AML1-ETO) fusion protein, possibly leading to trigger signals inhibiting leukemogenesis. Interacts with USH1G. In terms of tissue distribution, widely expressed, with the higher expression seen in leukocyte and heart.

It is found in the nucleus speckle. RNA-binding protein that acts as a mRNA splicing cofactor by promoting efficient splicing of transcripts that possess weak splice sites. Specifically promotes splicing of many cell-cycle and DNA-repair transcripts that possess weak splice sites, such as TUBG1, KATNB1, TUBGCP2, AURKB, PCNT, AKT1, RAD23A, and FANCG. Probably acts by facilitating the interaction between Serine/arginine-rich proteins such as SRSF2 and the RNA polymerase II. Also binds to DNA; binds to the consensus DNA sequence: 5'-GA[GT]AN[CG][AG]CC-3'. May indirectly repress hepatitis B virus (HBV) core promoter activity and transcription of HBV genes and production of HBV virions. Essential for correct RNA splicing of multiple genes critical for brain development, neuronal migration and metabolism, including TUBG1, FLNA, PNKP, WDR62, PSMD3, PCK2, PFKL, IDH2, and ACY1. The protein is Protein SON (SON) of Homo sapiens (Human).